The sequence spans 334 residues: Hemin transport system permease protein HmuU (334 aa).

9 consecutive transmembrane segments (helical) span residues 9–29, 60–80, 96–116, 117–137, 149–169, 191–211, 244–264, 278–298, and 306–326; these read LMLGFLLILLVILALGSANMG, LLAVVVGCALAVSGTIMQGLF, AALCVGLIIVMPFSLPPLLAL, YSHMVGAFIGSLAISTIIFTL, LLAGIAINALCGAAVGVLTYI, WSTLLVASSLILPTCILGLLQ, AILIGAAVAVSGVIGFIGLVV, WLLPGAALGGACLLLTADTLA, and EMPVGLLTSLLGGPYFLWLIL.

It belongs to the binding-protein-dependent transport system permease family. FecCD subfamily.

It localises to the cell inner membrane. Part of the binding-protein-dependent transport system for hemin; probably responsible for the translocation of the substrate across the membrane. The protein is Hemin transport system permease protein HmuU (hmuU) of Yersinia pestis.